A 355-amino-acid chain; its full sequence is Guanine nucleotide-binding protein G(i) subunit alpha-2 (355 aa).

A lipid anchor (N-myristoyl glycine) is attached at G2. C3 is lipidated: S-palmitoyl cysteine. The G-alpha domain occupies 32-355 (REVKLLLLGA…KNNLKDCGLF (324 aa)). Residues 35 to 48 (KLLLLGAGESGKST) form a G1 motif region. Residues 40-47 (GAGESGKS), 176-182 (LRTRVKT), 201-205 (DVGGQ), 270-273 (NKKD), and A327 contribute to the GTP site. 2 residues coordinate Mg(2+): S47 and T182. The tract at residues 174–182 (DVLRTRVKT) is G2 motif. The interval 197–206 (FKMFDVGGQR) is G3 motif. Residues 266–273 (ILFLNKKD) are G4 motif. The segment at 325-330 (TCATDT) is G5 motif.

Belongs to the G-alpha family. G(i/o/t/z) subfamily. In terms of assembly, g proteins are composed of 3 units; alpha, beta and gamma. The alpha chain contains the guanine nucleotide binding site. In this context, interacts with GNB2. Interacts with UNC5B. Interacts with GPSM1. Interacts with RGS12 and RGS14. Interacts (inactive GDP-bound form) with NUCB1 (via GBA motif); the interaction leads to activation of GNAI3. Interacts (inactive GDP-bound form) with CCDC88C/DAPLE (via GBA motif). Interacts (inactive GDP-bound form) with CCDC8A/GIV (via GBA motif). Interacts with CXCR1 and CXCR2.

The protein resides in the cytoplasm. It is found in the cytoskeleton. Its subcellular location is the microtubule organizing center. It localises to the centrosome. The protein localises to the cell membrane. The protein resides in the membrane. In terms of biological role, guanine nucleotide-binding proteins (G proteins) are involved as modulators or transducers in various transmembrane signaling systems. The G(i) proteins are involved in hormonal regulation of adenylate cyclase: they inhibit the cyclase in response to beta-adrenergic stimuli. May play a role in cell division. The polypeptide is Guanine nucleotide-binding protein G(i) subunit alpha-2 (Gnai2) (Mus musculus (Mouse)).